Reading from the N-terminus, the 88-residue chain is Small ribosomal subunit protein bS20 (88 aa).

It belongs to the bacterial ribosomal protein bS20 family.

Its function is as follows. Binds directly to 16S ribosomal RNA. In Desulforamulus reducens (strain ATCC BAA-1160 / DSM 100696 / MI-1) (Desulfotomaculum reducens), this protein is Small ribosomal subunit protein bS20.